We begin with the raw amino-acid sequence, 220 residues long: Octanoyltransferase (220 aa).

Residues 36 to 212 (ADSPDQFWLV…CLARQLGRRL (177 aa)) form the BPL/LPL catalytic domain. Substrate-binding positions include 75–82 (RGGQVTYH), 142–144 (SLG), and 155–157 (GVA). The Acyl-thioester intermediate role is filled by C173.

The protein belongs to the LipB family.

The protein resides in the cytoplasm. The catalysed reaction is octanoyl-[ACP] + L-lysyl-[protein] = N(6)-octanoyl-L-lysyl-[protein] + holo-[ACP] + H(+). The protein operates within protein modification; protein lipoylation via endogenous pathway; protein N(6)-(lipoyl)lysine from octanoyl-[acyl-carrier-protein]: step 1/2. In terms of biological role, catalyzes the transfer of endogenously produced octanoic acid from octanoyl-acyl-carrier-protein onto the lipoyl domains of lipoate-dependent enzymes. Lipoyl-ACP can also act as a substrate although octanoyl-ACP is likely to be the physiological substrate. The protein is Octanoyltransferase of Chromohalobacter salexigens (strain ATCC BAA-138 / DSM 3043 / CIP 106854 / NCIMB 13768 / 1H11).